A 100-amino-acid polypeptide reads, in one-letter code: Putative membrane protein insertion efficiency factor (100 aa).

Residues 73–100 (DPVPDLPGSAPEENGRPSPDGQHSGSGG) form a disordered region.

This sequence belongs to the UPF0161 family.

Its subcellular location is the cell inner membrane. Its function is as follows. Could be involved in insertion of integral membrane proteins into the membrane. In Synechococcus sp. (strain JA-3-3Ab) (Cyanobacteria bacterium Yellowstone A-Prime), this protein is Putative membrane protein insertion efficiency factor.